The chain runs to 460 residues: Cysteine--tRNA ligase (460 aa).

Position 28 (Cys-28) interacts with Zn(2+). The 'HIGH' region motif lies at 30–40; that stretch reads VTIYDLCHIGH. Positions 209, 234, and 238 each coordinate Zn(2+). Positions 266–270 match the 'KMSKS' region motif; that stretch reads KMSKS. Lys-269 serves as a coordination point for ATP.

The protein belongs to the class-I aminoacyl-tRNA synthetase family. In terms of assembly, monomer. Zn(2+) is required as a cofactor.

It localises to the cytoplasm. The catalysed reaction is tRNA(Cys) + L-cysteine + ATP = L-cysteinyl-tRNA(Cys) + AMP + diphosphate. The protein is Cysteine--tRNA ligase of Vibrio parahaemolyticus serotype O3:K6 (strain RIMD 2210633).